Here is a 158-residue protein sequence, read N- to C-terminus: Sec-independent protein translocase protein TatB (158 aa).

The chain crosses the membrane as a helical span at residues 1-21; sequence MFDIGWSELLVIGVVALVVVG. The tract at residues 73–158 is disordered; that stretch reads RSMGLDAMKQ…PAPAEPKSNA (86 aa). A compositionally biased stretch (basic and acidic residues) spans 83 to 92; that stretch reads AADRFEKWDP. Composition is skewed to low complexity over residues 94–132 and 138–158; these read KPQQGAPKPAAPASSIPAAKAQQGAGAAAVTAPPASEPA and APAAAAPEAASPAPAEPKSNA.

Belongs to the TatB family. As to quaternary structure, the Tat system comprises two distinct complexes: a TatABC complex, containing multiple copies of TatA, TatB and TatC subunits, and a separate TatA complex, containing only TatA subunits. Substrates initially bind to the TatABC complex, which probably triggers association of the separate TatA complex to form the active translocon.

It is found in the cell inner membrane. Part of the twin-arginine translocation (Tat) system that transports large folded proteins containing a characteristic twin-arginine motif in their signal peptide across membranes. Together with TatC, TatB is part of a receptor directly interacting with Tat signal peptides. TatB may form an oligomeric binding site that transiently accommodates folded Tat precursor proteins before their translocation. The chain is Sec-independent protein translocase protein TatB from Cereibacter sphaeroides (strain ATCC 17029 / ATH 2.4.9) (Rhodobacter sphaeroides).